The following is a 259-amino-acid chain: Flagellar L-ring protein (259 aa).

The signal sequence occupies residues 1-15 (MKRISLIALVTLMSG). Cys-16 carries the N-palmitoyl cysteine lipid modification. Cys-16 carries the S-diacylglycerol cysteine lipid modification.

Belongs to the FlgH family. In terms of assembly, the basal body constitutes a major portion of the flagellar organelle and consists of four rings (L,P,S, and M) mounted on a central rod.

Its subcellular location is the cell outer membrane. The protein resides in the bacterial flagellum basal body. Functionally, assembles around the rod to form the L-ring and probably protects the motor/basal body from shearing forces during rotation. In Vibrio vulnificus (strain YJ016), this protein is Flagellar L-ring protein.